A 25-amino-acid polypeptide reads, in one-letter code: Ribosome-inactivating protein charantin (25 aa).

As to quaternary structure, monomer.

It catalyses the reaction Endohydrolysis of the N-glycosidic bond at one specific adenosine on the 28S rRNA.. Functionally, inhibits cell-free translation in a rabbit reticulocyte lysate system. The sequence is that of Ribosome-inactivating protein charantin from Momordica charantia (Bitter gourd).